Consider the following 289-residue polypeptide: MLRRAVRERRQFIYKRNQELQEAKLNEKRRALRKALEGNKELNKDLQEDSQLQKDYKYDESRATQEETETNLDDEYHRLGEREPKVLVTTSREPSSRLAQFAKEVRLLIPNSYRLNRGNIVVGSLVEAARANDITDIVILHEHRGIPDGLVISHLPYGPTLSFSLHNVVLRHDIPNTGTMSEAYPHLIFENLTSKLGKRVKTALSALFPPDPKDTTPRVVTFANTDDYISFRHHIYAKTGPKQIILSEAGPRFEMKLFEITLGTVDMVDADVEWKLKPYQRHKRDVLAE.

Positions L42–Q65 are enriched in basic and acidic residues. The segment at L42–R82 is disordered. The 183-residue stretch at P84–D266 folds into the Brix domain.

In terms of assembly, component of a heterotrimeric complex containing imp3, imp4 and mpp10.

The protein resides in the nucleus. It is found in the nucleolus. Functionally, component of the U3 small nucleolar ribonucleoprotein. Required for the early cleavages at sites A0, A1 and A2 during 18S ribosomal pre-RNA processing. The polypeptide is U3 small nucleolar ribonucleoprotein protein imp4 (imp4) (Schizosaccharomyces pombe (strain 972 / ATCC 24843) (Fission yeast)).